The following is a 167-amino-acid chain: Cytochrome b6-f complex subunit 4 (167 aa).

Transmembrane regions (helical) follow at residues 36–56 (LLYI…GLAV), 95–115 (LLGV…PFLE), and 131–151 (TVFL…TLPI).

The protein belongs to the cytochrome b family. PetD subfamily. The 4 large subunits of the cytochrome b6-f complex are cytochrome b6, subunit IV (17 kDa polypeptide, petD), cytochrome f and the Rieske protein, while the 4 small subunits are petG, petL, petM and petN. The complex functions as a dimer.

It localises to the plastid. It is found in the chloroplast thylakoid membrane. In terms of biological role, component of the cytochrome b6-f complex, which mediates electron transfer between photosystem II (PSII) and photosystem I (PSI), cyclic electron flow around PSI, and state transitions. The protein is Cytochrome b6-f complex subunit 4 of Calycanthus floridus var. glaucus (Eastern sweetshrub).